A 154-amino-acid polypeptide reads, in one-letter code: Lymphocyte antigen 6K (154 aa).

The signal sequence occupies residues 1–20 (MAFLVALLVVLGLQLVQSNA). In terms of domain architecture, UPAR/Ly6 spans 21–117 (LTCHVCEAQN…NGEGPPTDQL (97 aa)). G123 carries GPI-anchor amidated glycine lipidation. The propeptide at 124 to 154 (KASGRRHRYIELLLTGFMVLTANGLSALCLL) is removed in mature form.

Interacts with ADAM3 and TEX101. Strongly expressed in testes and weakly expressed in the epididymis, ovary, and uterus. Expressed in testicular germ cells (TGCs). Expressed in the testicular seminiferous tubules, in spermatocytes, spermatids, and testicular spermatozoa.

It localises to the secreted. The protein localises to the cytoplasm. It is found in the cell membrane. Its subcellular location is the cytoplasmic vesicle. The protein resides in the secretory vesicle. It localises to the acrosome. The protein localises to the membrane raft. In terms of biological role, required for sperm migration into the oviduct and male fertility by controlling binding of sperm to zona pellucida. May play a role in cell growth. This chain is Lymphocyte antigen 6K, found in Mus musculus (Mouse).